A 161-amino-acid chain; its full sequence is Type II secretion system protein M (161 aa).

Over 1–16 (MHNLLALWQQRTRRER) the chain is Cytoplasmic. Residues 17–36 (CLLLGMAVVLLIGLVYYTLW) form a helical membrane-spanning segment. The Periplasmic segment spans residues 37–161 (QPWQNREAQW…TLVLERSDEK (125 aa)).

It belongs to the GSP M family. In terms of assembly, type II secretion system is composed of four main components: the outer membrane complex, the inner membrane complex, the cytoplasmic secretion ATPase and the periplasm-spanning pseudopilus. Forms homodimers. Interacts with PulL/GspL. Interacts with PulE/GspE and PulF/GspF.

It localises to the cell inner membrane. Inner membrane component of the type II secretion system required for the energy-dependent secretion of extracellular factors such as proteases and toxins from the periplasm. Plays a role in the complex assembly and recruits PulL resulting in a stable complex in the inner membrane. Provides thus a link between the energy-providing PulE protein in the cytoplasm and the rest of the T2SS machinery. The sequence is that of Type II secretion system protein M (pulM) from Klebsiella pneumoniae.